Reading from the N-terminus, the 670-residue chain is DNA ligase (670 aa).

NAD(+) contacts are provided by residues 32-36 (DAEYD), 81-82 (SL), and E113. K115 acts as the N6-AMP-lysine intermediate in catalysis. R136, E173, K290, and K314 together coordinate NAD(+). Residues C408, C411, C426, and C432 each contribute to the Zn(2+) site. The region spanning 592–670 (EIDSPFAGKT…EAEMIRLLGE (79 aa)) is the BRCT domain.

Belongs to the NAD-dependent DNA ligase family. LigA subfamily. The cofactor is Mg(2+). Requires Mn(2+) as cofactor.

The catalysed reaction is NAD(+) + (deoxyribonucleotide)n-3'-hydroxyl + 5'-phospho-(deoxyribonucleotide)m = (deoxyribonucleotide)n+m + AMP + beta-nicotinamide D-nucleotide.. Its function is as follows. DNA ligase that catalyzes the formation of phosphodiester linkages between 5'-phosphoryl and 3'-hydroxyl groups in double-stranded DNA using NAD as a coenzyme and as the energy source for the reaction. It is essential for DNA replication and repair of damaged DNA. The chain is DNA ligase from Yersinia pseudotuberculosis serotype O:1b (strain IP 31758).